A 348-amino-acid polypeptide reads, in one-letter code: MATWSGFNVSSSPLLRLRSSSVSNVTKLPFLSPICRRRLLAERFGLATVVVTRQNLTVTPSSAAVEARISGKREPMTPPYNILITGSTKGIGYALAREFLKAGDNVVICSRSAERVETAVQSLKEEFGEHVWGTKCDVTEGKDVRELVAYSQKNLKYIDIWINNAGSNAYSFKPLAEASDEDLIEVVKTNTLGLMLCCREAMNMMLTQSRGGHIFNIDGAGSDGRPTPRFAAYGATKRSVVHLTKSLQAELQMQDVKNVVVHNLSPGMVTTDLLMSGATTKQAKFFINVLAEPAEVVAEYLVPNIRAIPASGSMKPTYIRFLTGIKAYTKIFSRVALGARKNRYVTEE.

The N-terminal 61 residues, 1-61 (MATWSGFNVS…TRQNLTVTPS (61 aa)), are a transit peptide targeting the chloroplast. 84-108 (ITGSTKGIGYALAREFLKAGDNVVI) lines the NAD(+) pocket. Catalysis depends on tyrosine 233, which acts as the Proton acceptor.

The protein belongs to the short-chain dehydrogenases/reductases (SDR) family. As to quaternary structure, interacts with NCY1 to form a complex that acts as a chlorophyll b reductase. Interacts with HCAR, RCCR and the LHCII complex. Part of a SGR1-CCE-LHCII complex, which acts in chlorophyll breakdown.

The protein localises to the plastid. It localises to the chloroplast thylakoid membrane. The catalysed reaction is 7(1)-hydroxychlorophyllide a + NAD(+) = chlorophyllide b + NADH + H(+). The enzyme catalyses 7(1)-hydroxychlorophyllide a + NADP(+) = chlorophyllide b + NADPH + H(+). Its function is as follows. Required for chlorophyll b degradation. Chlorophyll b, chlorophyllide b, pheophorbide b and pheophytin b can be used as substrates. Belongs to the chlorophyll catabolic enzymes (CCEs). The polypeptide is Chlorophyll(ide) b reductase NOL, chloroplastic (NOL) (Arabidopsis thaliana (Mouse-ear cress)).